Consider the following 241-residue polypeptide: Glucosamine-6-phosphate deaminase (241 aa).

The Proton acceptor; for enolization step role is filled by Asp67. The active-site For ring-opening step is the Asn136. His138 acts as the Proton acceptor; for ring-opening step in catalysis. Glu143 acts as the For ring-opening step in catalysis.

Belongs to the glucosamine/galactosamine-6-phosphate isomerase family. NagB subfamily.

The enzyme catalyses alpha-D-glucosamine 6-phosphate + H2O = beta-D-fructose 6-phosphate + NH4(+). It participates in amino-sugar metabolism; N-acetylneuraminate degradation; D-fructose 6-phosphate from N-acetylneuraminate: step 5/5. In terms of biological role, catalyzes the reversible isomerization-deamination of glucosamine 6-phosphate (GlcN6P) to form fructose 6-phosphate (Fru6P) and ammonium ion. This is Glucosamine-6-phosphate deaminase from Bacillus velezensis (strain DSM 23117 / BGSC 10A6 / LMG 26770 / FZB42) (Bacillus amyloliquefaciens subsp. plantarum).